We begin with the raw amino-acid sequence, 377 residues long: Probable purine permease 22 (377 aa).

Helical transmembrane passes span 39 to 59 (WLRV…ATVL), 71 to 91 (TYVV…FRFF), 107 to 127 (SPSF…VSAY), 128 to 148 (AYLS…LILA), 166 to 186 (FTPL…LLVV), 202 to 222 (VIGF…LSLI), 238 to 258 (VLDL…IGLF), 283 to 303 (TLAS…GLIF), 309 to 329 (FSNS…VIVF), and 338 to 358 (IFSI…HYLD).

It belongs to the purine permeases (TC 2.A.7.14) family.

It localises to the membrane. The sequence is that of Probable purine permease 22 (PUP22) from Arabidopsis thaliana (Mouse-ear cress).